We begin with the raw amino-acid sequence, 143 residues long: Small ribosomal subunit protein eS19y (143 aa).

The protein belongs to the eukaryotic ribosomal protein eS19 family.

This Arabidopsis thaliana (Mouse-ear cress) protein is Small ribosomal subunit protein eS19y (RPS19B).